Consider the following 340-residue polypeptide: Glycerol-3-phosphate dehydrogenase [NAD(P)+] (340 aa).

NADPH is bound by residues tryptophan 11, arginine 33, and lysine 110. 3 residues coordinate sn-glycerol 3-phosphate: lysine 110, glycine 144, and serine 146. Alanine 148 is a binding site for NADPH. The sn-glycerol 3-phosphate site is built by lysine 199, aspartate 252, serine 262, arginine 263, and asparagine 264. Catalysis depends on lysine 199, which acts as the Proton acceptor. Arginine 263 provides a ligand contact to NADPH. Residues valine 287 and glutamate 289 each contribute to the NADPH site.

This sequence belongs to the NAD-dependent glycerol-3-phosphate dehydrogenase family.

The protein localises to the cytoplasm. It carries out the reaction sn-glycerol 3-phosphate + NAD(+) = dihydroxyacetone phosphate + NADH + H(+). It catalyses the reaction sn-glycerol 3-phosphate + NADP(+) = dihydroxyacetone phosphate + NADPH + H(+). It functions in the pathway membrane lipid metabolism; glycerophospholipid metabolism. Functionally, catalyzes the reduction of the glycolytic intermediate dihydroxyacetone phosphate (DHAP) to sn-glycerol 3-phosphate (G3P), the key precursor for phospholipid synthesis. The polypeptide is Glycerol-3-phosphate dehydrogenase [NAD(P)+] (Polynucleobacter necessarius subsp. necessarius (strain STIR1)).